The sequence spans 417 residues: Imidazolonepropionase (417 aa).

Fe(3+) contacts are provided by H80 and H82. Residues H80 and H82 each coordinate Zn(2+). R89, Y152, and H187 together coordinate 4-imidazolone-5-propanoate. Position 152 (Y152) interacts with N-formimidoyl-L-glutamate. Position 252 (H252) interacts with Fe(3+). H252 serves as a coordination point for Zn(2+). E255 serves as a coordination point for 4-imidazolone-5-propanoate. D326 provides a ligand contact to Fe(3+). D326 is a binding site for Zn(2+). Residues N328 and G330 each contribute to the N-formimidoyl-L-glutamate site. S331 lines the 4-imidazolone-5-propanoate pocket.

This sequence belongs to the metallo-dependent hydrolases superfamily. HutI family. Zn(2+) serves as cofactor. Fe(3+) is required as a cofactor.

The protein localises to the cytoplasm. The enzyme catalyses 4-imidazolone-5-propanoate + H2O = N-formimidoyl-L-glutamate. The protein operates within amino-acid degradation; L-histidine degradation into L-glutamate; N-formimidoyl-L-glutamate from L-histidine: step 3/3. Catalyzes the hydrolytic cleavage of the carbon-nitrogen bond in imidazolone-5-propanoate to yield N-formimidoyl-L-glutamate. It is the third step in the universal histidine degradation pathway. This is Imidazolonepropionase from Bacteroides thetaiotaomicron (strain ATCC 29148 / DSM 2079 / JCM 5827 / CCUG 10774 / NCTC 10582 / VPI-5482 / E50).